A 306-amino-acid polypeptide reads, in one-letter code: Aspartate carbamoyltransferase catalytic subunit (306 aa).

Residues R55 and T56 each contribute to the carbamoyl phosphate site. K84 is a binding site for L-aspartate. Carbamoyl phosphate is bound by residues R105, H133, and Q136. L-aspartate is bound by residues R166 and R227. Positions 265 and 266 each coordinate carbamoyl phosphate.

It belongs to the aspartate/ornithine carbamoyltransferase superfamily. ATCase family. In terms of assembly, heterododecamer (2C3:3R2) of six catalytic PyrB chains organized as two trimers (C3), and six regulatory PyrI chains organized as three dimers (R2).

It carries out the reaction carbamoyl phosphate + L-aspartate = N-carbamoyl-L-aspartate + phosphate + H(+). Its pathway is pyrimidine metabolism; UMP biosynthesis via de novo pathway; (S)-dihydroorotate from bicarbonate: step 2/3. Its function is as follows. Catalyzes the condensation of carbamoyl phosphate and aspartate to form carbamoyl aspartate and inorganic phosphate, the committed step in the de novo pyrimidine nucleotide biosynthesis pathway. In Neisseria meningitidis serogroup A / serotype 4A (strain DSM 15465 / Z2491), this protein is Aspartate carbamoyltransferase catalytic subunit.